Here is a 731-residue protein sequence, read N- to C-terminus: Alpha-catulin (731 aa).

Residues serine 373 and serine 537 each carry the phosphoserine modification. The disordered stretch occupies residues 535-559 (HLSLPKPTKNSANLKSLKPDKPDSE).

It belongs to the vinculin/alpha-catenin family. In terms of assembly, interacts with ARHGEF1. Interacts with Dtna. The interaction is required for correct localization of both Ctnnal1 and Dtna.

It is found in the cytoplasm. It localises to the cytoskeleton. The protein localises to the cell membrane. Functionally, may modulate the Rho pathway signaling by providing a scaffold for the Lbc Rho guanine nucleotide exchange factor (ARHGEF1). In Mus musculus (Mouse), this protein is Alpha-catulin (Ctnnal1).